Here is a 76-residue protein sequence, read N- to C-terminus: Membrane protein UL43 homolog (76 aa).

2 consecutive transmembrane segments (helical) span residues 7 to 27 (AVCVVLAAFGYWVAAPISLAF) and 54 to 74 (ISRWLIVSVYVAAGLCYATII).

It belongs to the alphaherpesvirinae HHV-1 UL43 family.

The protein resides in the membrane. The protein is Membrane protein UL43 homolog of Equus caballus (Horse).